The following is a 475-amino-acid chain: Coronin-2B (475 aa).

WD repeat units follow at residues 80–120, 130–172, 174–212, 215–258, and 260–303; these read GHQG…LKRN, GHSR…KMID, HTDV…VLQE, CKNH…MPVT, and EEID…PYLT. A coiled-coil region spans residues 431–470; that stretch reads NELLRMFFKQQEEIRRLKEQLSQRDLLVRQLELELKNLRN.

It belongs to the WD repeat coronin family.

The protein localises to the cytoplasm. The protein resides in the cytoskeleton. May play a role in the reorganization of neuronal actin structure. This is Coronin-2B (coro2b) from Xenopus laevis (African clawed frog).